A 573-amino-acid chain; its full sequence is 2-succinyl-5-enolpyruvyl-6-hydroxy-3-cyclohexene-1-carboxylate synthase (573 aa).

The protein belongs to the TPP enzyme family. MenD subfamily. As to quaternary structure, homodimer. Mg(2+) is required as a cofactor. Mn(2+) serves as cofactor. Requires thiamine diphosphate as cofactor.

It carries out the reaction isochorismate + 2-oxoglutarate + H(+) = 5-enolpyruvoyl-6-hydroxy-2-succinyl-cyclohex-3-ene-1-carboxylate + CO2. It functions in the pathway quinol/quinone metabolism; 1,4-dihydroxy-2-naphthoate biosynthesis; 1,4-dihydroxy-2-naphthoate from chorismate: step 2/7. The protein operates within quinol/quinone metabolism; menaquinone biosynthesis. In terms of biological role, catalyzes the thiamine diphosphate-dependent decarboxylation of 2-oxoglutarate and the subsequent addition of the resulting succinic semialdehyde-thiamine pyrophosphate anion to isochorismate to yield 2-succinyl-5-enolpyruvyl-6-hydroxy-3-cyclohexene-1-carboxylate (SEPHCHC). The polypeptide is 2-succinyl-5-enolpyruvyl-6-hydroxy-3-cyclohexene-1-carboxylate synthase (Shewanella sp. (strain ANA-3)).